The primary structure comprises 341 residues: Inositol 2-dehydrogenase (341 aa).

This sequence belongs to the Gfo/Idh/MocA family. As to quaternary structure, homotetramer.

It carries out the reaction myo-inositol + NAD(+) = scyllo-inosose + NADH + H(+). Its function is as follows. Involved in the oxidation of myo-inositol (MI) to 2-keto-myo-inositol (2KMI or 2-inosose). This Acidothermus cellulolyticus (strain ATCC 43068 / DSM 8971 / 11B) protein is Inositol 2-dehydrogenase.